The primary structure comprises 354 residues: Probable L-ascorbate-6-phosphate lactonase UlaG (354 aa).

Belongs to the UlaG family. A divalent metal cation serves as cofactor.

Its subcellular location is the cytoplasm. The enzyme catalyses L-ascorbate 6-phosphate + H2O = 3-dehydro-L-gulonate 6-phosphate. The protein operates within cofactor degradation; L-ascorbate degradation; D-xylulose 5-phosphate from L-ascorbate: step 1/4. Functionally, probably catalyzes the hydrolysis of L-ascorbate-6-P into 3-keto-L-gulonate-6-P. Is essential for L-ascorbate utilization under anaerobic conditions. The sequence is that of Probable L-ascorbate-6-phosphate lactonase UlaG from Salmonella choleraesuis (strain SC-B67).